The primary structure comprises 183 residues: Small ribosomal subunit protein uS4c (183 aa).

The 62-residue stretch at 82-143 folds into the S4 RNA-binding domain; it reads MRLDNILFRL…KQRSKALIQN (62 aa).

It belongs to the universal ribosomal protein uS4 family. As to quaternary structure, part of the 30S ribosomal subunit. Contacts protein S5. The interaction surface between S4 and S5 is involved in control of translational fidelity.

The protein localises to the plastid. The protein resides in the chloroplast. Its function is as follows. One of the primary rRNA binding proteins, it binds directly to 16S rRNA where it nucleates assembly of the body of the 30S subunit. In terms of biological role, with S5 and S12 plays an important role in translational accuracy. The protein is Small ribosomal subunit protein uS4c (rps4) of Aristea capitata.